Reading from the N-terminus, the 401-residue chain is 8-amino-7-oxononanoate synthase (401 aa).

Arginine 19 is a substrate binding site. Position 106 to 107 (106 to 107 (GY)) interacts with pyridoxal 5'-phosphate. Residue histidine 131 coordinates substrate. Pyridoxal 5'-phosphate-binding residues include serine 176, histidine 204, and threonine 233. Lysine 236 carries the post-translational modification N6-(pyridoxal phosphate)lysine. Threonine 350 contacts substrate.

This sequence belongs to the class-II pyridoxal-phosphate-dependent aminotransferase family. BioF subfamily. Homodimer. Pyridoxal 5'-phosphate is required as a cofactor.

It catalyses the reaction 6-carboxyhexanoyl-[ACP] + L-alanine + H(+) = (8S)-8-amino-7-oxononanoate + holo-[ACP] + CO2. The protein operates within cofactor biosynthesis; biotin biosynthesis. Catalyzes the decarboxylative condensation of pimeloyl-[acyl-carrier protein] and L-alanine to produce 8-amino-7-oxononanoate (AON), [acyl-carrier protein], and carbon dioxide. The protein is 8-amino-7-oxononanoate synthase of Pseudomonas aeruginosa (strain LESB58).